We begin with the raw amino-acid sequence, 502 residues long: Betaine aldehyde dehydrogenase, chloroplastic (502 aa).

The transit peptide at 1–7 (MAFPIPA) directs the protein to the chloroplast. 240–245 (GSSATG) contributes to the NAD(+) binding site. The Proton acceptor role is filled by Glu262. Catalysis depends on Cys296, which acts as the Nucleophile.

The protein belongs to the aldehyde dehydrogenase family. Homodimer.

Its subcellular location is the plastid. It is found in the chloroplast. It carries out the reaction betaine aldehyde + NAD(+) + H2O = glycine betaine + NADH + 2 H(+). It functions in the pathway amine and polyamine biosynthesis; betaine biosynthesis via choline pathway; betaine from betaine aldehyde: step 1/1. The protein is Betaine aldehyde dehydrogenase, chloroplastic of Atriplex hortensis (Mountain spinach).